Consider the following 873-residue polypeptide: MKSSAELRKIFLDYFRHQSHEIVPSGPLVPANDPTLLFTNAGMVQFKEVFLGREVRAYHRAASAQRCVRAGGKHNDLENVGYTARHHTFFEMLGNFSFGDYFKREAIGYAWELLTEVLKLPPERLWVTVFKEDDEAANIWLQEIGVSPERFSRCGAEDNFWSMGETGPCGPCSEIFYDHGPEIEGGPPGSPEQEGDRYTEIWNLVFMQYDRGKEGRLSPLPRPSVDTGMGLERLAAVMQGVHDNYNIDLFRNLIAAITALSGIQNQEQTSLRVIADHIRSCVFLIVDGIQPSNEGRGYVLRRIIRRAIRHGHKLGLRDPFFYRLVEPLVQEMGEAYPELFRLQSQVERVLKLEEERFNETLEQGLKILEQDIIDLSDAVIPGETIFRLYDTFGFPVDLTADIARERKLTLDMKGFEQAMAKQRKRARAASRFKIEYGSELQMDLETEFTGYEQLRGEGQIAALFRLAETMETVEQLSAGESGMVVLDRTPFYAEAGGQVGDRGTLRGSNGLFNVTDTHKQGAAHVHLGEVRLGQLRVGDSIQSEVDRKYRTPTRLNHSATHLLHAALREVLGEGVIQKGSLVASDRLRFDFSHLEAVQSGQLRQIEHLVNAKIRANLPVETQIMPLQQALDAGVMALFGEKYGEQVRVLRMGDFSMELCGGTHVDRTGDIGLFKIINEMGVAAGIRRIEAVTGEAALSWVEEGEVCLEALMGRLKASRNSAVDKLEQLQQQTRQQEKELQRLKAKLATTGGADLSIQAQEIRGIKVLAARIDGVDSKTLRATVDQLKGKLITAAVVLGTVVEDKVVLIAGVTNNATSRIKAGDLVNFVAEQVGGRGGGRPDMAQAGGRNPDKLDAALDLVPKWVEGQLTSGAQ.

H557, H561, C659, and H663 together coordinate Zn(2+).

It belongs to the class-II aminoacyl-tRNA synthetase family. The cofactor is Zn(2+).

The protein resides in the cytoplasm. It catalyses the reaction tRNA(Ala) + L-alanine + ATP = L-alanyl-tRNA(Ala) + AMP + diphosphate. Catalyzes the attachment of alanine to tRNA(Ala) in a two-step reaction: alanine is first activated by ATP to form Ala-AMP and then transferred to the acceptor end of tRNA(Ala). Also edits incorrectly charged Ser-tRNA(Ala) and Gly-tRNA(Ala) via its editing domain. The protein is Alanine--tRNA ligase of Nitrosococcus oceani (strain ATCC 19707 / BCRC 17464 / JCM 30415 / NCIMB 11848 / C-107).